A 357-amino-acid chain; its full sequence is Transactivator protein DR7 (357 aa).

The segment at 107–187 is interaction with host p53; sequence LVGKDGAVYV…LLTVGGLCQT (81 aa).

Belongs to the herpesviridae US22 family. In terms of assembly, interacts with host p53 and inhibits p53-activated transcription.

Involved in transactivation. Displays transforming activity. In Homo sapiens (Human), this protein is Transactivator protein DR7 (DR7L).